The sequence spans 600 residues: Aspartate--tRNA(Asp/Asn) ligase (600 aa).

Position 187 (Glu-187) interacts with L-aspartate. An aspartate region spans residues 211-214 (QIFK). 2 residues coordinate L-aspartate: Arg-233 and His-463. Residue 233–235 (RDE) coordinates ATP. Glu-497 serves as a coordination point for ATP. Arg-504 contributes to the L-aspartate binding site. An ATP-binding site is contributed by 549-552 (GVDR).

This sequence belongs to the class-II aminoacyl-tRNA synthetase family. Type 1 subfamily. Homodimer.

Its subcellular location is the cytoplasm. The catalysed reaction is tRNA(Asx) + L-aspartate + ATP = L-aspartyl-tRNA(Asx) + AMP + diphosphate. In terms of biological role, aspartyl-tRNA synthetase with relaxed tRNA specificity since it is able to aspartylate not only its cognate tRNA(Asp) but also tRNA(Asn). Reaction proceeds in two steps: L-aspartate is first activated by ATP to form Asp-AMP and then transferred to the acceptor end of tRNA(Asp/Asn). The polypeptide is Aspartate--tRNA(Asp/Asn) ligase (Wolbachia sp. subsp. Drosophila simulans (strain wRi)).